The primary structure comprises 211 residues: Thymidylate kinase (211 aa).

10–17 is an ATP binding site; that stretch reads GPDGAGKT.

This sequence belongs to the thymidylate kinase family.

The enzyme catalyses dTMP + ATP = dTDP + ADP. In terms of biological role, phosphorylation of dTMP to form dTDP in both de novo and salvage pathways of dTTP synthesis. The polypeptide is Thymidylate kinase (tmk) (Lactococcus lactis subsp. lactis (strain IL1403) (Streptococcus lactis)).